We begin with the raw amino-acid sequence, 445 residues long: Glycine--tRNA ligase (445 aa).

K97 and E145 together coordinate substrate. ATP contacts are provided by residues 177-179 (RNE), 187-192 (FRTCEF), 262-263 (EI), and 308-311 (GLTR). A substrate-binding site is contributed by 192-196 (FEQME). Substrate is bound at residue 304 to 308 (ETSLG).

This sequence belongs to the class-II aminoacyl-tRNA synthetase family. As to quaternary structure, homodimer.

It localises to the cytoplasm. It catalyses the reaction tRNA(Gly) + glycine + ATP = glycyl-tRNA(Gly) + AMP + diphosphate. In terms of biological role, catalyzes the attachment of glycine to tRNA(Gly). The chain is Glycine--tRNA ligase from Borrelia hermsii (strain HS1 / DAH).